Reading from the N-terminus, the 498-residue chain is Glycerol kinase (498 aa).

ADP is bound at residue Thr-13. ATP is bound by residues Thr-13, Thr-14, and Ser-15. Thr-13 provides a ligand contact to sn-glycerol 3-phosphate. Arg-17 is a binding site for ADP. 4 residues coordinate sn-glycerol 3-phosphate: Arg-83, Glu-84, Tyr-135, and Asp-244. Arg-83, Glu-84, Tyr-135, Asp-244, and Gln-245 together coordinate glycerol. ADP contacts are provided by Thr-266 and Gly-309. Positions 266, 309, 313, and 410 each coordinate ATP. Residues Gly-410 and Asn-414 each contribute to the ADP site.

It belongs to the FGGY kinase family.

It carries out the reaction glycerol + ATP = sn-glycerol 3-phosphate + ADP + H(+). Its pathway is polyol metabolism; glycerol degradation via glycerol kinase pathway; sn-glycerol 3-phosphate from glycerol: step 1/1. Its activity is regulated as follows. Inhibited by fructose 1,6-bisphosphate (FBP). Functionally, key enzyme in the regulation of glycerol uptake and metabolism. Catalyzes the phosphorylation of glycerol to yield sn-glycerol 3-phosphate. This is Glycerol kinase from Koribacter versatilis (strain Ellin345).